Here is a 179-residue protein sequence, read N- to C-terminus: Large ribosomal subunit protein uL5 (179 aa).

It belongs to the universal ribosomal protein uL5 family. In terms of assembly, part of the 50S ribosomal subunit; part of the 5S rRNA/L5/L18/L25 subcomplex. Contacts the 5S rRNA and the P site tRNA. Forms a bridge to the 30S subunit in the 70S ribosome.

Its function is as follows. This is one of the proteins that bind and probably mediate the attachment of the 5S RNA into the large ribosomal subunit, where it forms part of the central protuberance. In the 70S ribosome it contacts protein S13 of the 30S subunit (bridge B1b), connecting the 2 subunits; this bridge is implicated in subunit movement. Contacts the P site tRNA; the 5S rRNA and some of its associated proteins might help stabilize positioning of ribosome-bound tRNAs. The sequence is that of Large ribosomal subunit protein uL5 from Geobacter sp. (strain M21).